Reading from the N-terminus, the 884-residue chain is Cytosolic carboxypeptidase-like protein 5 (884 aa).

One can recognise a Peptidase M14 domain in the interval 157-570 (YPFSYSDCQD…AMAIAALDMA (414 aa)). Zn(2+) contacts are provided by H252 and E255. 2 disordered regions span residues 343–364 (HPQS…PLSD) and 376–401 (HLGH…KASG). Position 434 (H434) interacts with Zn(2+). E516 serves as the catalytic Proton donor/acceptor. 2 disordered regions span residues 603–737 (LSST…HSTG) and 784–859 (QVRP…RICY). A compositionally biased stretch (polar residues) spans 620 to 635 (PPRSNSGLPVSCSENP). Composition is skewed to low complexity over residues 641-666 (SFST…NSPS) and 714-737 (PTSS…HSTG). At S839 the chain carries Phosphoserine. The span at 846 to 857 (ISCSLSDSQSRI) shows a compositional bias: polar residues.

It belongs to the peptidase M14 family. Zn(2+) serves as cofactor.

Its subcellular location is the cytoplasm. It is found in the cytosol. The protein resides in the nucleus. It localises to the cytoskeleton. The protein localises to the spindle. Its subcellular location is the midbody. The catalysed reaction is gamma-L-glutamyl-L-glutamyl-[protein] + H2O = L-glutamyl-[protein] + L-glutamate. It catalyses the reaction (L-glutamyl)(n+1)-gamma-L-glutamyl-L-glutamyl-[protein] + H2O = (L-glutamyl)(n)-gamma-L-glutamyl-L-glutamyl-[protein] + L-glutamate. It carries out the reaction C-terminal L-alpha-aminoacyl-L-glutamyl-[tubulin] + H2O = C-terminal L-alpha-aminoacyl-[tubulin] + L-glutamate. The enzyme catalyses C-terminal L-alpha-aminoacyl-L-glutamyl-L-glutamyl-[tubulin] + H2O = C-terminal L-alpha-aminoacyl-L-glutamyl-[tubulin] + L-glutamate. Metallocarboxypeptidase that mediates deglutamylation of tubulin and non-tubulin target proteins. Catalyzes the removal of polyglutamate side chains present on the gamma-carboxyl group of glutamate residues within the C-terminal tail of alpha- and beta-tubulin. Cleaves alpha- and gamma-linked polyglutamate tubulin side-chain, as well as the branching point glutamate. Also catalyzes the removal of alpha-linked glutamate residues from the carboxy-terminus of alpha-tubulin. Mediates deglutamylation of nucleotidyltransferase CGAS, leading to CGAS antiviral defense response activation. This chain is Cytosolic carboxypeptidase-like protein 5 (AGBL5), found in Ailuropoda melanoleuca (Giant panda).